The following is a 460-amino-acid chain: C4-dicarboxylate transport protein (460 aa).

The next 9 helical transmembrane spans lie at 20-40, 56-76, 88-108, 153-173, 200-220, 234-254, 301-321, 342-362, and 364-384; these read SLYF…HFYP, LIKM…IAGM, YALL…LIVV, IVGA…VIFG, IINM…AFTI, LMIC…GAIC, VVGL…SIYL, ITLL…TGSG, and IVLA…LALI. The interval 438-460 is disordered; that stretch reads PEDDLGVAEGPTPANAVNTTKTV.

Belongs to the dicarboxylate/amino acid:cation symporter (DAACS) (TC 2.A.23) family.

Its subcellular location is the cell inner membrane. In terms of biological role, responsible for the transport of dicarboxylates such as succinate, fumarate, and malate from the periplasm across the membrane. The polypeptide is C4-dicarboxylate transport protein (Pseudomonas savastanoi pv. phaseolicola (strain 1448A / Race 6) (Pseudomonas syringae pv. phaseolicola (strain 1448A / Race 6))).